Here is a 100-residue protein sequence, read N- to C-terminus: NADH-quinone oxidoreductase subunit K 2 (100 aa).

The next 3 helical transmembrane spans lie at 4 to 24 (LWWS…GVLL), 28 to 48 (ILIV…NFIA), and 60 to 80 (IFAI…LGIL).

The protein belongs to the complex I subunit 4L family. NDH-1 is composed of 14 different subunits. Subunits NuoA, H, J, K, L, M, N constitute the membrane sector of the complex.

The protein resides in the cell inner membrane. It carries out the reaction a quinone + NADH + 5 H(+)(in) = a quinol + NAD(+) + 4 H(+)(out). Its function is as follows. NDH-1 shuttles electrons from NADH, via FMN and iron-sulfur (Fe-S) centers, to quinones in the respiratory chain. The immediate electron acceptor for the enzyme in this species is believed to be ubiquinone. Couples the redox reaction to proton translocation (for every two electrons transferred, four hydrogen ions are translocated across the cytoplasmic membrane), and thus conserves the redox energy in a proton gradient. The polypeptide is NADH-quinone oxidoreductase subunit K 2 (Rhizobium meliloti (strain 1021) (Ensifer meliloti)).